The primary structure comprises 336 residues: Dihydroorotate dehydrogenase (quinone) (336 aa).

FMN-binding positions include 62–66 (AGLDK) and threonine 86. Lysine 66 contributes to the substrate binding site. Position 111–115 (111–115 (NRMGF)) interacts with substrate. FMN is bound by residues asparagine 139 and asparagine 172. A substrate-binding site is contributed by asparagine 172. Serine 175 functions as the Nucleophile in the catalytic mechanism. Asparagine 177 is a substrate binding site. 2 residues coordinate FMN: lysine 217 and threonine 245. 246-247 (NT) serves as a coordination point for substrate. FMN-binding positions include glycine 268, glycine 297, and 318–319 (YS).

Belongs to the dihydroorotate dehydrogenase family. Type 2 subfamily. Monomer. Requires FMN as cofactor.

Its subcellular location is the cell membrane. It catalyses the reaction (S)-dihydroorotate + a quinone = orotate + a quinol. The protein operates within pyrimidine metabolism; UMP biosynthesis via de novo pathway; orotate from (S)-dihydroorotate (quinone route): step 1/1. Catalyzes the conversion of dihydroorotate to orotate with quinone as electron acceptor. The polypeptide is Dihydroorotate dehydrogenase (quinone) (Edwardsiella ictaluri (strain 93-146)).